The primary structure comprises 1398 residues: Pyrolysin (1398 aa).

The N-terminal stretch at Met-1 to Ala-26 is a signal peptide. A propeptide spanning residues Gly-27–Lys-149 is cleaved from the precursor. Asn-152 is a glycosylation site (N-linked (GlcNAc...) asparagine). One can recognise a Peptidase S8 domain in the interval Thr-154 to Trp-656. The Charge relay system role is filled by Asp-179. N-linked (GlcNAc...) asparagine glycans are attached at residues Asn-222, Asn-228, Asn-240, Asn-257, Asn-262, Asn-298, and Asn-327. Catalysis depends on His-365, which acts as the Charge relay system. N-linked (GlcNAc...) asparagine glycosylation is present at Asn-406. Ser-590 acts as the Charge relay system in catalysis. 19 N-linked (GlcNAc...) asparagine glycosylation sites follow: Asn-651, Asn-663, Asn-739, Asn-792, Asn-893, Asn-908, Asn-917, Asn-929, Asn-1048, Asn-1056, Asn-1084, Asn-1117, Asn-1133, Asn-1140, Asn-1148, Asn-1208, Asn-1233, Asn-1237, and Asn-1332.

This sequence belongs to the peptidase S8 family. LWM pyrolysin seems to be produced by autoproteolytic activation of HMW pyrolysin. In terms of processing, glycosylated.

It is found in the cell envelope. Its function is as follows. Has endopeptidase activity toward caseins, casein fragments including alpha-S1-casein and synthetic peptides. The sequence is that of Pyrolysin (pls) from Pyrococcus furiosus (strain ATCC 43587 / DSM 3638 / JCM 8422 / Vc1).